The primary structure comprises 96 residues: UPF0235 protein Shewmr4_1190 (96 aa).

Belongs to the UPF0235 family.

This is UPF0235 protein Shewmr4_1190 from Shewanella sp. (strain MR-4).